The chain runs to 224 residues: UPF0758 protein PFL_6051 (224 aa).

The region spanning 102-224 (ALENPLVVRD…PLSMAEYGWI (123 aa)) is the MPN domain. Positions 173, 175, and 186 each coordinate Zn(2+). The short motif at 173-186 (HNHPSGICEPSPAD) is the JAMM motif element.

Belongs to the UPF0758 family.

This Pseudomonas fluorescens (strain ATCC BAA-477 / NRRL B-23932 / Pf-5) protein is UPF0758 protein PFL_6051.